The primary structure comprises 535 residues: Endogenous retrovirus group V member 2 Env polyprotein (535 aa).

Residues 1 to 21 (MTEKFLFLYLSLLPMPLLSQA) form the signal peptide. The Extracellular segment spans residues 22 to 321 (QWNENSLVSF…NTTQPRQKRA (300 aa)). Residue N68 is glycosylated (N-linked (GlcNAc...) asparagine). The chain crosses the membrane as a helical span at residues 322-342 (LGLILAGMGAAIGMIAPWGGF). The Cytoplasmic segment spans residues 343–456 (TYHDVTLRNL…VKSALPSLNW (114 aa)). Residues 457 to 477 (FVPLLGPATVILLLFLFGPCF) traverse the membrane as a helical segment. Residues 478–535 (FNLLIKCVSSRIKQFHMKSPQMERYQLSVIGGPSTYKHISPLDASGQRFRETMEEFSL) are Extracellular-facing.

It belongs to the gamma type-C retroviral envelope protein family. Expressed in placenta.

It is found in the membrane. The protein is Endogenous retrovirus group V member 2 Env polyprotein (ERVV-2) of Homo sapiens (Human).